The chain runs to 588 residues: Sulfite reductase [NADPH] hemoprotein beta-component (588 aa).

[4Fe-4S] cluster-binding residues include Cys442, Cys448, Cys487, and Cys491. Cys491 lines the siroheme pocket.

It belongs to the nitrite and sulfite reductase 4Fe-4S domain family. Alpha(8)-beta(8). The alpha component is a flavoprotein, the beta component is a hemoprotein. Siroheme is required as a cofactor. It depends on [4Fe-4S] cluster as a cofactor.

It catalyses the reaction hydrogen sulfide + 3 NADP(+) + 3 H2O = sulfite + 3 NADPH + 4 H(+). The protein operates within sulfur metabolism; hydrogen sulfide biosynthesis; hydrogen sulfide from sulfite (NADPH route): step 1/1. In terms of biological role, component of the sulfite reductase complex that catalyzes the 6-electron reduction of sulfite to sulfide. This is one of several activities required for the biosynthesis of L-cysteine from sulfate. The sequence is that of Sulfite reductase [NADPH] hemoprotein beta-component from Actinobacillus pleuropneumoniae serotype 7 (strain AP76).